We begin with the raw amino-acid sequence, 101 residues long: Urease subunit beta (101 aa).

Belongs to the urease beta subunit family. As to quaternary structure, heterotrimer of UreA (gamma), UreB (beta) and UreC (alpha) subunits. Three heterotrimers associate to form the active enzyme.

It is found in the cytoplasm. It catalyses the reaction urea + 2 H2O + H(+) = hydrogencarbonate + 2 NH4(+). The protein operates within nitrogen metabolism; urea degradation; CO(2) and NH(3) from urea (urease route): step 1/1. The sequence is that of Urease subunit beta from Pseudomonas syringae pv. syringae (strain B728a).